The primary structure comprises 581 residues: Adenine deaminase (581 aa).

The protein belongs to the metallo-dependent hydrolases superfamily. Adenine deaminase family. Mn(2+) is required as a cofactor.

The enzyme catalyses adenine + H2O + H(+) = hypoxanthine + NH4(+). This is Adenine deaminase from Lysinibacillus sphaericus (strain C3-41).